The following is a 79-amino-acid chain: Inhibitor of host cell division protein (79 aa).

Residues 15–35 (RQQRSAMLEQEQAEKDKKERR) are a coiled coil. Residues 37–57 (AGLLFFGTIVVLVAVVAVYIV) form a helical membrane-spanning segment.

It localises to the host membrane. Inhibits host cell division leading to filamentation. Does not prevent host cell growth, DNA synthesis or chromosome segregation. Does not seem to be essential for productive bacterial host infection. The chain is Inhibitor of host cell division protein from Bacillus subtilis (Bacteriophage SP01).